A 114-amino-acid chain; its full sequence is MSDDVALPLQFTEAAAKKVKVLIADENNPELKLRVYITGGGCSGFQYGFTFDDQINDGDMTIEKQGVALVVDPMSLQYLVGGAVDYTEGLEGSRFVVTNPNAKSTCGCGSSFSI.

Residues Cys-42, Cys-106, and Cys-108 each coordinate iron-sulfur cluster.

This sequence belongs to the HesB/IscA family. Homodimer. It depends on iron-sulfur cluster as a cofactor.

In terms of biological role, required for insertion of 4Fe-4S clusters for at least IspG. This chain is Iron-sulfur cluster insertion protein ErpA, found in Enterobacter sp. (strain 638).